The chain runs to 80 residues: Omega-conotoxin-like 1 (80 aa).

Positions 1–22 (MKLTCVLIVVVLFLTACQLITT) are cleaved as a signal peptide. Positions 23–49 (DDSTGKQRYQAWKLRSKMQNSVLSRLS) are excised as a propeptide. Disulfide bonds link Cys52/Cys66, Cys59/Cys70, and Cys65/Cys79.

Belongs to the conotoxin O1 superfamily. In terms of processing, peptide predicted to begin at Arg-51, but it seems more probable that it begins at Cys-52, since this position corresponds to a dibasic residue cleavage. As to expression, expressed by the venom duct.

It localises to the secreted. In terms of biological role, omega-conotoxins act at presynaptic membranes, they bind and block voltage-gated calcium channels (Cav). The sequence is that of Omega-conotoxin-like 1 from Conus capitaneus (Captain cone).